The primary structure comprises 404 residues: MTYKIMAINAGSSSLKFQLLNMPQGALLCQGLIERIGLPEARFTLKTSAQKWQETLPIADHHEAVTLLLEALTGRGILSSLQEIDGVGHRVAHGGERFKDAALVCDDTLREIERLAELAPLHNPVNALGIRLFRQLLPAVPAVAVFDTAFHQTLAPEAWLYPLPWRYYAELGIRRYGFHGTSHHYVSSALAEKLGVPLSALRVVSCHLGNGCSVCAIKGGQSVNTSMGFTPQSGVMMGTRSGDLDPSILPWLVEKEGKSAQQLSQLLNNESGLLGVSGVSSDYRDVEQAADAGNERAALALSLFAERIRATIGSYIMQMGGLDALIFTGGIGENSARARAAICRNLHFLGLALDDEKNQRSATFIQADNALVKVAVINTNEELMIARDVMRLALPQARELAVSA.

This sequence belongs to the acetokinase family. PduW subfamily.

The protein localises to the cytoplasm. The catalysed reaction is propanoate + ATP = propanoyl phosphate + ADP. It participates in polyol metabolism; 1,2-propanediol degradation. Works with phosphate acetyltransferase (pta) to capture exogenous propionate and regenerate propionyl-CoA during degradation of 1,2-propanediol (1,2-PD). This is Propionate kinase from Klebsiella pneumoniae subsp. pneumoniae (strain ATCC 700721 / MGH 78578).